The following is a 416-amino-acid chain: LysM domain-containing GPI-anchored protein 1 (416 aa).

The N-terminal stretch at 1-27 is a signal peptide; it reads MKIPEKPIFLIFVSLILASSLTFTATA. Cystine bridges form between C34–C100, C40–C163, C98–C161, and C100–C163. An N-linked (GlcNAc...) asparagine glycan is attached at N37. One can recognise a LysM 1 domain in the interval 110–157; sequence THYKTRPSDNLGSIADSVYGGLVSAEQIQEANSVNDPSLLDVGTSLVI. N165 carries N-linked (GlcNAc...) asparagine glycosylation. The 44-residue stretch at 176–219 folds into the LysM 2 domain; sequence LSYVVKEIDTLVGIARRYSTTITDLMNVNAMGAPDVSSGDILAV. Disulfide bonds link C224–C256 and C251–C279. Residue N241 is glycosylated (N-linked (GlcNAc...) asparagine). N288, N299, and N310 each carry an N-linked (GlcNAc...) asparagine glycan. The disordered stretch occupies residues 356 to 376; sequence DGPGSIASSPRSSMLPGGGIL. A391 is lipidated: GPI-anchor amidated alanine. The propeptide at 392-416 is removed in mature form; sequence SASSVSYFFITFLISIASFSLALSS.

Interacts with peptidoglycans.

The protein localises to the cell membrane. It localises to the secreted. Its function is as follows. Required as a cell surface receptor for peptidoglycan (PGN) elicitor signaling leading to innate immunity. Plays an essential role in detecting PGNs and restricting bacterial growth (of Pseudomonas syringae pv. tomato DC3000 for example). The protein is LysM domain-containing GPI-anchored protein 1 (LYM1) of Arabidopsis thaliana (Mouse-ear cress).